The following is a 202-amino-acid chain: Probable molybdenum cofactor guanylyltransferase (202 aa).

GTP-binding positions include 13-15 (LAG), Lys25, Asp71, and Asp103. Mg(2+) is bound at residue Asp103.

The protein belongs to the MobA family. Mg(2+) is required as a cofactor.

Its subcellular location is the cytoplasm. It carries out the reaction Mo-molybdopterin + GTP + H(+) = Mo-molybdopterin guanine dinucleotide + diphosphate. Transfers a GMP moiety from GTP to Mo-molybdopterin (Mo-MPT) cofactor (Moco or molybdenum cofactor) to form Mo-molybdopterin guanine dinucleotide (Mo-MGD) cofactor. This is Probable molybdenum cofactor guanylyltransferase from Opitutus terrae (strain DSM 11246 / JCM 15787 / PB90-1).